The sequence spans 732 residues: Putative pectinesterase/pectinesterase inhibitor 28 (732 aa).

Residues 17 to 37 (VIISISSVLLISMVVAVTIGV) traverse the membrane as a helical segment. Asparagine 40, asparagine 93, asparagine 278, and asparagine 297 each carry an N-linked (GlcNAc...) asparagine glycan. The interval 51–204 (TTSVKAIKDV…VQLTHNGLAM (154 aa)) is pectinesterase inhibitor 28. Residues 252 to 548 (DIVVAQDGSG…FTPAQYIQGD (297 aa)) form a pectinesterase 28 region. 2 residues coordinate substrate: threonine 327 and glutamine 357. The Proton donor; for pectinesterase activity role is filled by aspartate 380. A disulfide bridge links cysteine 394 with cysteine 414. The Nucleophile; for pectinesterase activity role is filled by aspartate 401. Asparagine 413 is a glycosylation site (N-linked (GlcNAc...) asparagine). The substrate site is built by arginine 469 and tryptophan 471. N-linked (GlcNAc...) asparagine glycans are attached at residues asparagine 566, asparagine 570, and asparagine 581. Low complexity-rich tracts occupy residues 570-620 (NSTV…PSTS) and 633-732 (PSMV…SSIG). The disordered stretch occupies residues 570-732 (NSTVTGSSLS…PSASPQSSIG (163 aa)).

In the N-terminal section; belongs to the PMEI family. The protein in the C-terminal section; belongs to the pectinesterase family. As to expression, expressed in flower buds.

It localises to the membrane. It carries out the reaction [(1-&gt;4)-alpha-D-galacturonosyl methyl ester](n) + n H2O = [(1-&gt;4)-alpha-D-galacturonosyl](n) + n methanol + n H(+). It participates in glycan metabolism; pectin degradation; 2-dehydro-3-deoxy-D-gluconate from pectin: step 1/5. Functionally, acts in the modification of cell walls via demethylesterification of cell wall pectin. The sequence is that of Putative pectinesterase/pectinesterase inhibitor 28 (PME28) from Arabidopsis thaliana (Mouse-ear cress).